The following is a 919-amino-acid chain: TRPM8 channel-associated factor 2 (919 aa).

A Peptidase M60 domain is found at 543 to 842 (DVWMSTGLYL…TYLQLQEVFG (300 aa)).

The protein belongs to the TCAF family. In terms of assembly, interacts with TRPM8 (via N-terminus and C-terminus domains); the interaction inhibits TRPM8 channel activity. Interacts with TRPV6.

It localises to the cell membrane. Functionally, negatively regulates the plasma membrane cation channel TRPM8 activity. Involved in the recruitment of TRPM8 to the cell surface. Promotes prostate cancer cell migration stimulation in a TRPM8-dependent manner. The sequence is that of TRPM8 channel-associated factor 2 from Mus musculus (Mouse).